A 248-amino-acid polypeptide reads, in one-letter code: 1-(5-phosphoribosyl)-5-[(5-phosphoribosylamino)methylideneamino] imidazole-4-carboxamide isomerase (248 aa).

Asp-11 serves as the catalytic Proton acceptor. Residue Asp-132 is the Proton donor of the active site.

Belongs to the HisA/HisF family.

It localises to the cytoplasm. It catalyses the reaction 1-(5-phospho-beta-D-ribosyl)-5-[(5-phospho-beta-D-ribosylamino)methylideneamino]imidazole-4-carboxamide = 5-[(5-phospho-1-deoxy-D-ribulos-1-ylimino)methylamino]-1-(5-phospho-beta-D-ribosyl)imidazole-4-carboxamide. Its pathway is amino-acid biosynthesis; L-histidine biosynthesis; L-histidine from 5-phospho-alpha-D-ribose 1-diphosphate: step 4/9. In Afipia carboxidovorans (strain ATCC 49405 / DSM 1227 / KCTC 32145 / OM5) (Oligotropha carboxidovorans), this protein is 1-(5-phosphoribosyl)-5-[(5-phosphoribosylamino)methylideneamino] imidazole-4-carboxamide isomerase.